The following is a 263-amino-acid chain: TLC domain-containing protein 4 (263 aa).

Helical transmembrane passes span 7–27 (LLIS…YFVS), 53–73 (VVST…FLFD), 90–110 (VNIA…ILYW), and 124–144 (ASLY…IGNF). The TLC domain occupies 44-246 (KKKIEWNSRV…ISKGCIKVIS (203 aa)). At Lys165 the chain carries N6-acetyllysine. 2 helical membrane-spanning segments follow: residues 173 to 193 (IVIN…ASML) and 211 to 231 (LGVL…VMNV).

This sequence belongs to the TLCD4 family.

Its subcellular location is the membrane. The chain is TLC domain-containing protein 4 from Homo sapiens (Human).